The sequence spans 267 residues: 4-hydroxy-tetrahydrodipicolinate reductase (267 aa).

NAD(+) contacts are provided by residues 12–17 (GARGRM), aspartate 38, 100–102 (GTT), and 126–129 (APNF). Histidine 156 acts as the Proton donor/acceptor in catalysis. Histidine 157 is a binding site for (S)-2,3,4,5-tetrahydrodipicolinate. The active-site Proton donor is lysine 160. 166–167 (GT) lines the (S)-2,3,4,5-tetrahydrodipicolinate pocket.

Belongs to the DapB family.

The protein resides in the cytoplasm. It carries out the reaction (S)-2,3,4,5-tetrahydrodipicolinate + NAD(+) + H2O = (2S,4S)-4-hydroxy-2,3,4,5-tetrahydrodipicolinate + NADH + H(+). The enzyme catalyses (S)-2,3,4,5-tetrahydrodipicolinate + NADP(+) + H2O = (2S,4S)-4-hydroxy-2,3,4,5-tetrahydrodipicolinate + NADPH + H(+). The protein operates within amino-acid biosynthesis; L-lysine biosynthesis via DAP pathway; (S)-tetrahydrodipicolinate from L-aspartate: step 4/4. Its function is as follows. Catalyzes the conversion of 4-hydroxy-tetrahydrodipicolinate (HTPA) to tetrahydrodipicolinate. This Bacillus pumilus (strain SAFR-032) protein is 4-hydroxy-tetrahydrodipicolinate reductase.